Reading from the N-terminus, the 25-residue chain is NPVDDIXIAKPRDIPMNPMXIYRSP.

Belongs to the serpin family. In terms of assembly, forms protease inhibiting heterodimer with TMPRSS7. In terms of processing, phosphorylated by FAM20C in the extracellular medium. Plasma.

The protein resides in the secreted. It localises to the extracellular space. Its function is as follows. Most important serine protease inhibitor in plasma that regulates the blood coagulation cascade. AT-III inhibits thrombin, matriptase-3/TMPRSS7, as well as factors IXa, Xa and XIa. Its inhibitory activity is greatly enhanced in the presence of heparin. This chain is Antithrombin-III (SERPINC1), found in Mesocricetus auratus (Golden hamster).